Reading from the N-terminus, the 493-residue chain is Farnesoate epoxidase (493 aa).

Positions 1-24 (MLALIVLCFILFFYIISRRHRGLC) are cleaved as a signal peptide. Residue cysteine 433 participates in heme binding.

Belongs to the cytochrome P450 family. Heme serves as cofactor. In terms of tissue distribution, constitutively expressed in corpora allata from the first instar larval to adult stages.

It carries out the reaction (2E,6E)-farnesoate + reduced [NADPH--hemoprotein reductase] + O2 = juvenile hormone III carboxylate + oxidized [NADPH--hemoprotein reductase] + H2O + H(+). Functionally, catalyzes the conversion of farnesoate to juvenile hormone III acid in juvenile hormone biosynthesis. The sequence is that of Farnesoate epoxidase from Bombyx mori (Silk moth).